Reading from the N-terminus, the 308-residue chain is Transaldolase (308 aa).

K125 acts as the Schiff-base intermediate with substrate in catalysis.

It belongs to the transaldolase family. Type 1 subfamily. Homodimer.

It is found in the cytoplasm. It carries out the reaction D-sedoheptulose 7-phosphate + D-glyceraldehyde 3-phosphate = D-erythrose 4-phosphate + beta-D-fructose 6-phosphate. It participates in carbohydrate degradation; pentose phosphate pathway; D-glyceraldehyde 3-phosphate and beta-D-fructose 6-phosphate from D-ribose 5-phosphate and D-xylulose 5-phosphate (non-oxidative stage): step 2/3. In terms of biological role, transaldolase is important for the balance of metabolites in the pentose-phosphate pathway. The polypeptide is Transaldolase (Stutzerimonas stutzeri (strain A1501) (Pseudomonas stutzeri)).